Reading from the N-terminus, the 247-residue chain is tRNA pseudouridine synthase A (247 aa).

Catalysis depends on Asp52, which acts as the Nucleophile. Tyr111 serves as a coordination point for substrate.

It belongs to the tRNA pseudouridine synthase TruA family. Homodimer.

It carries out the reaction uridine(38/39/40) in tRNA = pseudouridine(38/39/40) in tRNA. Its function is as follows. Formation of pseudouridine at positions 38, 39 and 40 in the anticodon stem and loop of transfer RNAs. In Erythrobacter litoralis (strain HTCC2594), this protein is tRNA pseudouridine synthase A.